Here is a 194-residue protein sequence, read N- to C-terminus: Putative 3-methyladenine DNA glycosylase (194 aa).

The protein belongs to the DNA glycosylase MPG family.

This Synechococcus elongatus (strain ATCC 33912 / PCC 7942 / FACHB-805) (Anacystis nidulans R2) protein is Putative 3-methyladenine DNA glycosylase.